Reading from the N-terminus, the 487-residue chain is Glutamyl-tRNA(Gln) amidotransferase subunit A (487 aa).

Catalysis depends on charge relay system residues K76 and S151. Residue S175 is the Acyl-ester intermediate of the active site.

This sequence belongs to the amidase family. GatA subfamily. In terms of assembly, heterotrimer of A, B and C subunits.

It carries out the reaction L-glutamyl-tRNA(Gln) + L-glutamine + ATP + H2O = L-glutaminyl-tRNA(Gln) + L-glutamate + ADP + phosphate + H(+). Functionally, allows the formation of correctly charged Gln-tRNA(Gln) through the transamidation of misacylated Glu-tRNA(Gln) in organisms which lack glutaminyl-tRNA synthetase. The reaction takes place in the presence of glutamine and ATP through an activated gamma-phospho-Glu-tRNA(Gln). The chain is Glutamyl-tRNA(Gln) amidotransferase subunit A from Azoarcus sp. (strain BH72).